The chain runs to 98 residues: NADH-ubiquinone oxidoreductase chain 4L (98 aa).

3 helical membrane-spanning segments follow: residues 1–21, 29–49, and 61–81; these read MSMVYFNILMAFIVSFVGLLM, SLLCLEGMMLSLFVMMSVTIL, and IILLVFAACEAALGLSLLVMV.

The protein belongs to the complex I subunit 4L family. In terms of assembly, core subunit of respiratory chain NADH dehydrogenase (Complex I) which is composed of 45 different subunits.

Its subcellular location is the mitochondrion inner membrane. It carries out the reaction a ubiquinone + NADH + 5 H(+)(in) = a ubiquinol + NAD(+) + 4 H(+)(out). Core subunit of the mitochondrial membrane respiratory chain NADH dehydrogenase (Complex I) which catalyzes electron transfer from NADH through the respiratory chain, using ubiquinone as an electron acceptor. Part of the enzyme membrane arm which is embedded in the lipid bilayer and involved in proton translocation. The protein is NADH-ubiquinone oxidoreductase chain 4L (MT-ND4L) of Eumetopias jubatus (Steller sea lion).